The sequence spans 96 residues: Citrate lyase acyl carrier protein (96 aa).

Ser14 bears the O-(phosphoribosyl dephospho-coenzyme A)serine mark.

It belongs to the CitD family. In terms of assembly, oligomer with a subunit composition of (alpha,beta,gamma)6.

It is found in the cytoplasm. Functionally, covalent carrier of the coenzyme of citrate lyase. The polypeptide is Citrate lyase acyl carrier protein (Lactococcus lactis subsp. lactis (strain IL1403) (Streptococcus lactis)).